A 119-amino-acid polypeptide reads, in one-letter code: Large ribosomal subunit protein bL17 (119 aa).

It belongs to the bacterial ribosomal protein bL17 family. In terms of assembly, part of the 50S ribosomal subunit. Contacts protein L32.

In Acholeplasma laidlawii (strain PG-8A), this protein is Large ribosomal subunit protein bL17.